The following is a 131-amino-acid chain: Small ribosomal subunit protein uS8 (131 aa).

This sequence belongs to the universal ribosomal protein uS8 family. Part of the 30S ribosomal subunit. Contacts proteins S5 and S12.

Its function is as follows. One of the primary rRNA binding proteins, it binds directly to 16S rRNA central domain where it helps coordinate assembly of the platform of the 30S subunit. This chain is Small ribosomal subunit protein uS8, found in Ralstonia pickettii (strain 12J).